Consider the following 187-residue polypeptide: dTTP/UTP pyrophosphatase (187 aa).

Catalysis depends on aspartate 65, which acts as the Proton acceptor.

The protein belongs to the Maf family. YhdE subfamily. It depends on a divalent metal cation as a cofactor.

The protein resides in the cytoplasm. The catalysed reaction is dTTP + H2O = dTMP + diphosphate + H(+). It catalyses the reaction UTP + H2O = UMP + diphosphate + H(+). Nucleoside triphosphate pyrophosphatase that hydrolyzes dTTP and UTP. May have a dual role in cell division arrest and in preventing the incorporation of modified nucleotides into cellular nucleic acids. The chain is dTTP/UTP pyrophosphatase from Deinococcus geothermalis (strain DSM 11300 / CIP 105573 / AG-3a).